We begin with the raw amino-acid sequence, 441 residues long: Double-stranded RNA-binding protein 1 (441 aa).

3 consecutive DRBM domains span residues 1–71, 86–155, and 169–237; these read MYKS…HLSS, SYKS…SLPQ, and SYKN…HFED. The interval 69-88 is disordered; sequence LSSLPLPPPPPPSENQSSYK.

Its function is as follows. Binds double-stranded RNA. In Oryza sativa subsp. japonica (Rice), this protein is Double-stranded RNA-binding protein 1 (DRB1).